The chain runs to 268 residues: Tryptophan synthase alpha chain (268 aa).

Catalysis depends on proton acceptor residues Glu49 and Asp60.

The protein belongs to the TrpA family. In terms of assembly, tetramer of two alpha and two beta chains.

It carries out the reaction (1S,2R)-1-C-(indol-3-yl)glycerol 3-phosphate + L-serine = D-glyceraldehyde 3-phosphate + L-tryptophan + H2O. It functions in the pathway amino-acid biosynthesis; L-tryptophan biosynthesis; L-tryptophan from chorismate: step 5/5. Functionally, the alpha subunit is responsible for the aldol cleavage of indoleglycerol phosphate to indole and glyceraldehyde 3-phosphate. The sequence is that of Tryptophan synthase alpha chain from Haemophilus influenzae (strain PittGG).